The following is a 222-amino-acid chain: Probable transcriptional regulator ycf29 (222 aa).

Residues 4–120 form the Response regulatory domain; that stretch reads KLMLVENDIV…ELLSIINNLI (117 aa). D53 carries the 4-aspartylphosphate modification. An HTH luxR-type domain is found at 139-204; the sequence is QLNHKIRLTP…LLVKYSINNN (66 aa). A DNA-binding region (H-T-H motif) is located at residues 163–182; the sequence is NKEISTILNTSVRNVEKYVS.

The protein localises to the plastid. It localises to the chloroplast. This is Probable transcriptional regulator ycf29 (ycf29) from Pyropia yezoensis (Susabi-nori).